The primary structure comprises 427 residues: Gamma-glutamyl phosphate reductase (427 aa).

This sequence belongs to the gamma-glutamyl phosphate reductase family.

It localises to the cytoplasm. It carries out the reaction L-glutamate 5-semialdehyde + phosphate + NADP(+) = L-glutamyl 5-phosphate + NADPH + H(+). The protein operates within amino-acid biosynthesis; L-proline biosynthesis; L-glutamate 5-semialdehyde from L-glutamate: step 2/2. Catalyzes the NADPH-dependent reduction of L-glutamate 5-phosphate into L-glutamate 5-semialdehyde and phosphate. The product spontaneously undergoes cyclization to form 1-pyrroline-5-carboxylate. The polypeptide is Gamma-glutamyl phosphate reductase (Brucella canis (strain ATCC 23365 / NCTC 10854 / RM-666)).